A 95-amino-acid polypeptide reads, in one-letter code: Co-chaperonin GroES (95 aa).

The protein belongs to the GroES chaperonin family. In terms of assembly, heptamer of 7 subunits arranged in a ring. Interacts with the chaperonin GroEL.

Its subcellular location is the cytoplasm. Functionally, together with the chaperonin GroEL, plays an essential role in assisting protein folding. The GroEL-GroES system forms a nano-cage that allows encapsulation of the non-native substrate proteins and provides a physical environment optimized to promote and accelerate protein folding. GroES binds to the apical surface of the GroEL ring, thereby capping the opening of the GroEL channel. This is Co-chaperonin GroES from Rickettsia conorii (strain ATCC VR-613 / Malish 7).